Consider the following 365-residue polypeptide: Cytosolic 5'-nucleotidase 1A (365 aa).

The span at 1-11 shows a compositional bias: basic and acidic residues; the sequence is MEPGQPREARE. The disordered stretch occupies residues 1 to 23; that stretch reads MEPGQPREAREPGPGAETAAVPR. Catalysis depends on aspartate 208, which acts as the Nucleophile.

Belongs to the 5'-nucleotidase type 3 family. Mg(2+) serves as cofactor.

The protein localises to the cytoplasm. It carries out the reaction a ribonucleoside 5'-phosphate + H2O = a ribonucleoside + phosphate. The catalysed reaction is a 2'-deoxyribonucleoside 5'-phosphate + H2O = a 2'-deoxyribonucleoside + phosphate. It catalyses the reaction IMP + H2O = inosine + phosphate. The enzyme catalyses AMP + H2O = adenosine + phosphate. It carries out the reaction dCMP + H2O = 2'-deoxycytidine + phosphate. Activated by ADP. Its function is as follows. Catalyzes the hydrolysis of ribonucleotide and deoxyribonucleotide monophosphates, releasing inorganic phosphate and the corresponding nucleoside. AMP is the major substrate but can also hydrolyze dCMP and IMP. This chain is Cytosolic 5'-nucleotidase 1A (Nt5c1a), found in Mus musculus (Mouse).